Reading from the N-terminus, the 251-residue chain is Ubiquinone/menaquinone biosynthesis C-methyltransferase UbiE (251 aa).

S-adenosyl-L-methionine is bound by residues threonine 74, aspartate 95, and asparagine 123–alanine 124.

It belongs to the class I-like SAM-binding methyltransferase superfamily. MenG/UbiE family.

It catalyses the reaction a 2-demethylmenaquinol + S-adenosyl-L-methionine = a menaquinol + S-adenosyl-L-homocysteine + H(+). The enzyme catalyses a 2-methoxy-6-(all-trans-polyprenyl)benzene-1,4-diol + S-adenosyl-L-methionine = a 5-methoxy-2-methyl-3-(all-trans-polyprenyl)benzene-1,4-diol + S-adenosyl-L-homocysteine + H(+). It functions in the pathway quinol/quinone metabolism; menaquinone biosynthesis; menaquinol from 1,4-dihydroxy-2-naphthoate: step 2/2. Its pathway is cofactor biosynthesis; ubiquinone biosynthesis. In terms of biological role, methyltransferase required for the conversion of demethylmenaquinol (DMKH2) to menaquinol (MKH2) and the conversion of 2-polyprenyl-6-methoxy-1,4-benzoquinol (DDMQH2) to 2-polyprenyl-3-methyl-6-methoxy-1,4-benzoquinol (DMQH2). The chain is Ubiquinone/menaquinone biosynthesis C-methyltransferase UbiE from Shewanella baltica (strain OS223).